The following is a 202-amino-acid chain: Riboflavin synthase (202 aa).

Lumazine-binding repeat units follow at residues Met1–His101 and Leu102–Ala198. Residues Gly4 to Ile6, Cys47 to Thr49, Glu66 to Trp68, Gly105 to Val107, Lys140, Ser149 to Thr151, and Leu163 to Ser168 contribute to the 2,4-dihydroxypteridine site.

Homotrimer.

It catalyses the reaction 2 6,7-dimethyl-8-(1-D-ribityl)lumazine + H(+) = 5-amino-6-(D-ribitylamino)uracil + riboflavin. It participates in cofactor biosynthesis; riboflavin biosynthesis; riboflavin from 2-hydroxy-3-oxobutyl phosphate and 5-amino-6-(D-ribitylamino)uracil: step 2/2. Is inhibited by riboflavin. Product inhibition may be the major mechanism by which RS regulates its enzymatic activity in vivo. Catalyzes the dismutation of two molecules of 6,7-dimethyl-8-ribityllumazine, resulting in the formation of riboflavin and 5-amino-6-(D-ribitylamino)uracil. This is Riboflavin synthase from Brucella abortus (strain 2308).